The chain runs to 485 residues: Glutamyl-tRNA(Gln) amidotransferase subunit A (485 aa).

Catalysis depends on charge relay system residues Lys78 and Ser153. Ser177 serves as the catalytic Acyl-ester intermediate.

The protein belongs to the amidase family. GatA subfamily. In terms of assembly, heterotrimer of A, B and C subunits.

It catalyses the reaction L-glutamyl-tRNA(Gln) + L-glutamine + ATP + H2O = L-glutaminyl-tRNA(Gln) + L-glutamate + ADP + phosphate + H(+). Allows the formation of correctly charged Gln-tRNA(Gln) through the transamidation of misacylated Glu-tRNA(Gln) in organisms which lack glutaminyl-tRNA synthetase. The reaction takes place in the presence of glutamine and ATP through an activated gamma-phospho-Glu-tRNA(Gln). This Geobacter sp. (strain M21) protein is Glutamyl-tRNA(Gln) amidotransferase subunit A.